A 329-amino-acid chain; its full sequence is MKSALFSRFFILLPWILIVIIMLDVDTRRPAPPLTPRPYFSPYAVGRGGARLPPRRGGPDSGPGRGWEKRNESRPHARPRPEPPLPTIYAITPTYSRPVQKAELTRLANTFRQVAQLHWILVEDAAARSELVSRFLARAGLPSTHLHVPTPRRYKRPGLPRATEQRNAGLAWLRQRHQHQRAQPGVLFFADDDNTYSLELFQEMRTTRKVSVWPVGLVGGRRYERPLVENGKVVGWYTGWRADRPFAIDMAGFAVSLQVILSNPKAVFKRRGSQPGMQESDFLKQITTVEELEPKANNCTKVLVWHTRTEKVNLANEPKYRLDTVKIEV.

Topologically, residues 1–2 (MK) are cytoplasmic. The helical; Signal-anchor for type II membrane protein transmembrane segment at 3-23 (SALFSRFFILLPWILIVIIML) threads the bilayer. Residues 24 to 329 (DVDTRRPAPP…YRLDTVKIEV (306 aa)) lie on the Lumenal side of the membrane. The segment at 45–87 (VGRGGARLPPRRGGPDSGPGRGWEKRNESRPHARPRPEPPLPT) is disordered. The segment covering 66 to 81 (GWEKRNESRPHARPRP) has biased composition (basic and acidic residues). The N-linked (GlcNAc...) asparagine glycan is linked to Asn71. Residues 93–95 (PTY), Asp124, Arg161, Arg166, and 191–193 (DDD) contribute to the UDP-alpha-D-glucuronate site. Asp193 serves as a coordination point for Mn(2+). The tract at residues 240–249 (WRADRPFAID) is interaction with galactose moiety of substrate glycoprotein. Glu279 functions as the Proton donor/acceptor in the catalytic mechanism. N-linked (GlcNAc...) asparagine glycosylation is present at Asn298. 306–308 (HTR) contributes to the UDP-alpha-D-glucuronate binding site.

The protein belongs to the glycosyltransferase 43 family. In terms of assembly, homodimer. Requires Mn(2+) as cofactor.

Its subcellular location is the golgi apparatus membrane. It carries out the reaction 3-O-(beta-D-galactosyl-(1-&gt;3)-beta-D-galactosyl-(1-&gt;4)-beta-D-xylosyl)-L-seryl-[protein] + UDP-alpha-D-glucuronate = 3-O-(beta-D-GlcA-(1-&gt;3)-beta-D-Gal-(1-&gt;3)-beta-D-Gal-(1-&gt;4)-beta-D-Xyl)-L-seryl-[protein] + UDP + H(+). It participates in protein modification; protein glycosylation. Involved in the biosynthesis of L2/HNK-1 carbohydrate epitope on both glycolipids and glycoproteins. In Canis lupus familiaris (Dog), this protein is Galactosylgalactosylxylosylprotein 3-beta-glucuronosyltransferase 2 (B3GAT2).